A 297-amino-acid chain; its full sequence is uncharacterized protein (297 aa).

An HTH lysR-type domain is found at 1–60 (MNIELRHLRYFVAVAEELHFGRAAARLNISQPPLSQQIQALEQQIGARLLARTNRSVLLT). The segment at residues 20-40 (FGRAAARLNISQPPLSQQIQA) is a DNA-binding region (H-T-H motif).

It belongs to the LysR transcriptional regulatory family.

This is an uncharacterized protein from Escherichia coli (strain K12).